The following is a 251-amino-acid chain: Uridylate kinase (251 aa).

ATP is bound at residue lysine 26–glycine 29. Residue glycine 67 coordinates UMP. The ATP site is built by glycine 68 and arginine 72. UMP is bound by residues aspartate 87 and methionine 148 to threonine 155. Positions 181 and 184 each coordinate ATP.

The protein belongs to the UMP kinase family. In terms of assembly, homohexamer.

Its subcellular location is the cytoplasm. It carries out the reaction UMP + ATP = UDP + ADP. It functions in the pathway pyrimidine metabolism; CTP biosynthesis via de novo pathway; UDP from UMP (UMPK route): step 1/1. Inhibited by UTP. Functionally, catalyzes the reversible phosphorylation of UMP to UDP. This chain is Uridylate kinase, found in Mycolicibacterium vanbaalenii (strain DSM 7251 / JCM 13017 / BCRC 16820 / KCTC 9966 / NRRL B-24157 / PYR-1) (Mycobacterium vanbaalenii).